An 855-amino-acid polypeptide reads, in one-letter code: DNA mismatch repair protein MutS (855 aa).

Position 615-622 (615-622 (GPNMGGKS)) interacts with ATP.

Belongs to the DNA mismatch repair MutS family.

Its function is as follows. This protein is involved in the repair of mismatches in DNA. It is possible that it carries out the mismatch recognition step. This protein has a weak ATPase activity. This Aliivibrio salmonicida (strain LFI1238) (Vibrio salmonicida (strain LFI1238)) protein is DNA mismatch repair protein MutS.